The following is a 348-amino-acid chain: Putative [LysW]-L-2-aminoadipate/[LysW]-L-glutamate phosphate reductase (348 aa).

S9 to V12 lines the NADP(+) pocket. The active site involves C149. N315 contributes to the NADP(+) binding site.

It belongs to the NAGSA dehydrogenase family. Type 1 subfamily. LysY sub-subfamily.

Its subcellular location is the cytoplasm. It catalyses the reaction [amino-group carrier protein]-C-terminal-N-(1-carboxy-5-oxopentan-1-yl)-L-glutamine + phosphate + NADP(+) = [amino-group carrier protein]-C-terminal-N-(1-carboxy-5-phosphooxy-5-oxopentan-1-yl)-L-glutamine + NADPH + H(+). The enzyme catalyses [amino-group carrier protein]-C-terminal-gamma-(L-glutamyl-5-semialdehyde)-L-glutamate + phosphate + NADP(+) = [amino-group carrier protein]-C-terminal-gamma-(5-phospho-L-glutamyl)-L-glutamate + NADPH + H(+). Its pathway is amino-acid biosynthesis; L-lysine biosynthesis via AAA pathway; L-lysine from L-alpha-aminoadipate (Thermus route): step 3/5. It participates in amino-acid biosynthesis; L-arginine biosynthesis. Involved in both the arginine and lysine biosynthetic pathways. The sequence is that of Putative [LysW]-L-2-aminoadipate/[LysW]-L-glutamate phosphate reductase from Nitrosopumilus maritimus (strain SCM1).